A 219-amino-acid polypeptide reads, in one-letter code: N-(5'-phosphoribosyl)anthranilate isomerase (219 aa).

Belongs to the TrpF family.

It catalyses the reaction N-(5-phospho-beta-D-ribosyl)anthranilate = 1-(2-carboxyphenylamino)-1-deoxy-D-ribulose 5-phosphate. Its pathway is amino-acid biosynthesis; L-tryptophan biosynthesis; L-tryptophan from chorismate: step 3/5. This chain is N-(5'-phosphoribosyl)anthranilate isomerase, found in Dehalococcoides mccartyi (strain ATCC BAA-2266 / KCTC 15142 / 195) (Dehalococcoides ethenogenes (strain 195)).